Reading from the N-terminus, the 281-residue chain is Bifunctional protein FolD (281 aa).

Residues 165–167, threonine 192, and valine 233 contribute to the NADP(+) site; that span reads GRG.

The protein belongs to the tetrahydrofolate dehydrogenase/cyclohydrolase family. Homodimer.

The enzyme catalyses (6R)-5,10-methylene-5,6,7,8-tetrahydrofolate + NADP(+) = (6R)-5,10-methenyltetrahydrofolate + NADPH. The catalysed reaction is (6R)-5,10-methenyltetrahydrofolate + H2O = (6R)-10-formyltetrahydrofolate + H(+). It participates in one-carbon metabolism; tetrahydrofolate interconversion. Catalyzes the oxidation of 5,10-methylenetetrahydrofolate to 5,10-methenyltetrahydrofolate and then the hydrolysis of 5,10-methenyltetrahydrofolate to 10-formyltetrahydrofolate. The sequence is that of Bifunctional protein FolD from Mycobacterium ulcerans (strain Agy99).